We begin with the raw amino-acid sequence, 336 residues long: UDP-N-acetylmuramoylpentapeptide-lysine N(6)-alanyltransferase (336 aa).

Residues 37 to 40 (KNNW), Tyr-104, Arg-212, Tyr-216, and Tyr-257 contribute to the substrate site.

It belongs to the FemABX family.

The enzyme catalyses UDP-N-acetyl-alpha-D-muramoyl-L-alanyl-gamma-D-glutamyl-L-lysyl-D-alanyl-D-alanine + L-alanyl-tRNA(Ala) = UDP-N-acetyl-alpha-D-muramoyl-L-alanyl-gamma-D-glutamyl-N(6)-(L-alanyl)-L-lysyl-D-alanyl-D-alanine + tRNA(Ala) + H(+). In terms of biological role, involved in the synthesis of the bacterial cell wall. Catalyzes the addition of alanine into the interchain peptide bridge of peptidoglycan precursor using aminoacyl-tRNA(Ala) as amino acid donor. This alanine is added to the epsilon-amino group of the L-lysine of the peptidoglycan UDP-N-acetyl-alpha-D-muramoyl-L-alanyl-D-glutamyl-L-lysyl-D-alanyl-D-alanine, in a ribosome-independent mechanism. Specific for UDP-N-acetyl-muramoyl-pentapeptide. Has no activity toward UDP-N-acetyl-muramoyl-tetrapeptide or UDP-N-acetyl-muramoyl-tripeptide. Also acts on L-seryl-tRNA(Ser). This chain is UDP-N-acetylmuramoylpentapeptide-lysine N(6)-alanyltransferase, found in Weissella viridescens (Lactobacillus viridescens).